The chain runs to 436 residues: Trigger factor (436 aa).

Positions 161-246 (EDQLNIDFVG…VNSVSEPKLP (86 aa)) constitute a PPIase FKBP-type domain.

This sequence belongs to the FKBP-type PPIase family. Tig subfamily.

The protein resides in the cytoplasm. It catalyses the reaction [protein]-peptidylproline (omega=180) = [protein]-peptidylproline (omega=0). Involved in protein export. Acts as a chaperone by maintaining the newly synthesized protein in an open conformation. Functions as a peptidyl-prolyl cis-trans isomerase. This Pseudomonas fluorescens (strain SBW25) protein is Trigger factor.